Here is a 1904-residue protein sequence, read N- to C-terminus: Pericentriolar material 1 protein (1904 aa).

Disordered regions lie at residues 1 to 135 (MATG…SGEP), 159 to 179 (QEDGRGEPTMDSSQARDPQQE), 265 to 303 (HDSQTQSVPDNRRQAESLSLTREISQSRNSSVSEHQSDE), 338 to 361 (NSSFFPASSSPQRSIDQRSTTSAA), 376 to 407 (NSLASAPYPPDSLASQNESEEDDNLNPTEKLQ), 430 to 489 (SDMM…GTNN), and 520 to 559 (CHNREDDKHADLPHGEDDEVEEDRASEDSMSSHRSSLGDV). Residues 43-60 (RSSEKNKKKLGGEAETRL) show a composition bias toward basic and acidic residues. The span at 107 to 118 (INFSDLDQINTN) shows a compositional bias: polar residues. The stretch at 171 to 212 (SQARDPQQEAKEELENLKKQHDLLKRMLQQQEQLKALQGRQA) forms a coiled coil. Over residues 280–298 (ESLSLTREISQSRNSSVSE) the composition is skewed to polar residues. Positions 301–334 (SDEKAQLFNKMRMLQGKKQKMDKLLGELHTLRDQ) form a coiled coil. Positions 338-348 (NSSFFPASSSP) are enriched in low complexity. The segment covering 349 to 361 (QRSIDQRSTTSAA) has biased composition (polar residues). Residues 403-429 (TEKLQKLNEVRKRLNELRELVHYYEQT) are a coiled coil. Acidic residues predominate over residues 442 to 452 (KEEEETEDSGS). Over residues 461-470 (PVTNIRNPQG) the composition is skewed to polar residues. Residues 471-482 (ISSWSEINSNSN) are compositionally biased toward low complexity. Over residues 520-534 (CHNREDDKHADLPHG) the composition is skewed to basic and acidic residues. The segment covering 535–544 (EDDEVEEDRA) has biased composition (acidic residues). Coiled coils occupy residues 562 to 592 (DAEFEQKINRLMAAKQKLRQLQNLAAMVQDD) and 636 to 686 (LNEK…LQSA). Residues 686–706 (AGLGNSPANRQTSPATSTPAM) form a disordered region. Over residues 687 to 706 (GLGNSPANRQTSPATSTPAM) the composition is skewed to polar residues. Positions 731-768 (SEMRRHEILREELRRRRKQLEALMAEHQRRRELAETIS) form a coiled coil. Residues 773–840 (SVKSEGSEAQ…PSMNDSFSAY (68 aa)) are disordered. Over residues 779–804 (SEAQRTPQQSRTENRTMATWGGSTQC) the composition is skewed to polar residues. Over residues 806 to 830 (LDEEDGDEDGYLSDGLDQAEEEEDA) the composition is skewed to acidic residues. Coiled-coil stretches lie at residues 895–927 (SELSYVEEKEQWQEQINQLKKQLEFSVSICQTL) and 970–1000 (TQLSWQQNNVQRLKQMLNDLMHQQEQQCQEK). 3 disordered regions span residues 991–1018 (HQQEQQCQEKPSRKERGSSAPPPPSPVF), 1063–1082 (GFPQSSEQQQHPLDHNASGK), and 1088–1225 (FPKP…TGYD). 2 stretches are compositionally biased toward polar residues: residues 1064–1073 (FPQSSEQQQH) and 1093–1102 (ESSSSTGAEN). Over residues 1103 to 1117 (QRSHRQPEDEVEKRS) the composition is skewed to basic and acidic residues. Over residues 1141–1150 (SVQSIASGHK) the composition is skewed to polar residues. Basic and acidic residues predominate over residues 1151-1162 (NQSDTSRRRNFD). Residues 1173-1182 (PDPVDPTTVT) show a composition bias toward low complexity. The stretch at 1421-1447 (IHLDQALARMREYERMKIEAESTLDSE) forms a coiled coil. Basic and acidic residues predominate over residues 1616–1625 (AKEDKDETET). Disordered regions lie at residues 1616-1741 (AKED…VKGE), 1774-1838 (MKTE…SDED), and 1865-1904 (EAQTNSLSDELLGGGGEQDRELVGDAQTLKEPETFGAQSA). The segment covering 1649–1658 (SDQEEDEESE) has biased composition (acidic residues). Polar residues predominate over residues 1668-1678 (KAETQALTNYG). A compositionally biased stretch (acidic residues) spans 1680-1695 (GEDENEDEEIEFEEGP). 3 stretches are compositionally biased toward polar residues: residues 1698–1720 (VQTSLQASSETATENEQISSQEL), 1728–1737 (ILSSEQQSVN), and 1779–1791 (SSSSLPGNETQML). Residues 1800 to 1812 (SSAGSSESSMAGS) are compositionally biased toward low complexity. Basic and acidic residues predominate over residues 1881–1897 (EQDRELVGDAQTLKEPE).

Belongs to the PCM1 family. As to quaternary structure, self-associates.

The protein resides in the cytoplasm. It is found in the cytoskeleton. It localises to the microtubule organizing center. The protein localises to the centrosome. Its subcellular location is the cytoplasmic granule. The protein resides in the centriolar satellite. It is found in the cilium basal body. Functionally, required for centrosome assembly and function. Essential for the correct localization of several centrosomal proteins including CETN3 and PCNT. Required to anchor microtubules to the centrosome. Probably involved in the biogenesis of cilia. This Gallus gallus (Chicken) protein is Pericentriolar material 1 protein (PCM1).